The sequence spans 132 residues: Small ribosomal subunit protein uS8 (132 aa).

It belongs to the universal ribosomal protein uS8 family. In terms of assembly, part of the 30S ribosomal subunit. Contacts proteins S5 and S12.

Its function is as follows. One of the primary rRNA binding proteins, it binds directly to 16S rRNA central domain where it helps coordinate assembly of the platform of the 30S subunit. This is Small ribosomal subunit protein uS8 from Rickettsia akari (strain Hartford).